The chain runs to 26 residues: TRSGGACNSHDQCCINFCRKATSTCM.

Disulfide bonds link Cys-7–Cys-18 and Cys-13–Cys-25.

The protein belongs to the conotoxin O1 superfamily. Expressed by the venom duct.

The protein resides in the secreted. The polypeptide is Conotoxin Eb6.18 (E1) (Conus ebraeus (Hebrew cone)).